Consider the following 387-residue polypeptide: Probable 1-alkyl-2-acetylglycerophosphocholine esterase (387 aa).

The N-terminal stretch at 1–17 (MLVQGTIICALVANAIA) is a signal peptide. Asn-51 and Asn-141 each carry an N-linked (GlcNAc...) asparagine glycan. Ser-227 acts as the Nucleophile in catalysis. Asp-250 (charge relay system) is an active-site residue. N-linked (GlcNAc...) asparagine glycosylation occurs at Asn-283. Residue His-313 is the Charge relay system of the active site.

The protein belongs to the AB hydrolase superfamily. Lipase family.

The protein resides in the secreted. The catalysed reaction is a 1-O-alkyl-2-acetyl-sn-glycero-3-phosphocholine + H2O = a 1-O-alkyl-sn-glycero-3-phosphocholine + acetate + H(+). This is Probable 1-alkyl-2-acetylglycerophosphocholine esterase from Arthroderma benhamiae (strain ATCC MYA-4681 / CBS 112371) (Trichophyton mentagrophytes).